Consider the following 369-residue polypeptide: mRNA cap guanine-N(7) methyltransferase 1 (369 aa).

The segment at 1–55 is disordered; the sequence is MNKRPRDEPSSSFASAPKRQYGAGGGGYGGHGYSEERSSARRVADHYSARSNQTL. Gly residues predominate over residues 22 to 32; it reads GAGGGGYGGHG. Basic and acidic residues predominate over residues 33 to 48; sequence YSEERSSARRVADHYS. In terms of domain architecture, mRNA cap 0 methyltransferase spans 61–340; the sequence is SPIIHLKKLN…LYLAFVLRKR (280 aa). 70–71 is a binding site for mRNA; it reads NN. Residues lysine 74, alanine 92, aspartate 114, 149–150, and 171–173 each bind S-adenosyl-L-methionine; these read DC and QFA.

The protein belongs to the class I-like SAM-binding methyltransferase superfamily. mRNA cap 0 methyltransferase family.

It is found in the nucleus. The catalysed reaction is a 5'-end (5'-triphosphoguanosine)-ribonucleoside in mRNA + S-adenosyl-L-methionine = a 5'-end (N(7)-methyl 5'-triphosphoguanosine)-ribonucleoside in mRNA + S-adenosyl-L-homocysteine. MRNA-capping methyltransferase that methylates the N7 position of the added guanosine to the 5'-cap structure of mRNAs. Binds RNA containing 5'-terminal GpppC. The polypeptide is mRNA cap guanine-N(7) methyltransferase 1 (Oryza sativa subsp. japonica (Rice)).